Consider the following 208-residue polypeptide: Probable Brix domain-containing ribosomal biogenesis protein (208 aa).

Residues 1–196 (MMLITTSHRP…IWIMEDGRRW (196 aa)) enclose the Brix domain.

Functionally, probably involved in the biogenesis of the ribosome. The polypeptide is Probable Brix domain-containing ribosomal biogenesis protein (Thermococcus kodakarensis (strain ATCC BAA-918 / JCM 12380 / KOD1) (Pyrococcus kodakaraensis (strain KOD1))).